A 204-amino-acid polypeptide reads, in one-letter code: Somatotropin (204 aa).

Positions 1–17 are cleaved as a signal peptide; it reads MNSVVLQLSVVCLGVSS. At Gln-18 the chain carries Pyrrolidone carboxylic acid. His-36 is a binding site for Zn(2+). An intrachain disulfide couples Cys-69 to Cys-177. Glu-186 is a binding site for Zn(2+). A disulfide bridge connects residues Cys-194 and Cys-202.

It belongs to the somatotropin/prolactin family.

It localises to the secreted. In terms of biological role, growth hormone plays an important role in growth control and involved in the regulation of several anabolic processes. This is Somatotropin (gh) from Oreochromis mossambicus (Mozambique tilapia).